Reading from the N-terminus, the 201-residue chain is MEKFSVHRGVGVPMRRTDVDTDQIIPAVYLKRVTKTGFEDALFAGWRKDPGFVLNQEPYRPGSVLVAGQDFGTGSSREHAVWALRDYGFRAVLAPRFGDIFRGNAGKQGLLAAVVAQSDIDLIWKALEAHPGTEVTVDLIERIVQVDDFTAPFEVDDYVRWRLVEGLDDIGLTLRHADAITDFEARRPSFKPTTTPLAPSA.

Belongs to the LeuD family. LeuD type 1 subfamily. In terms of assembly, heterodimer of LeuC and LeuD.

It catalyses the reaction (2R,3S)-3-isopropylmalate = (2S)-2-isopropylmalate. Its pathway is amino-acid biosynthesis; L-leucine biosynthesis; L-leucine from 3-methyl-2-oxobutanoate: step 2/4. Functionally, catalyzes the isomerization between 2-isopropylmalate and 3-isopropylmalate, via the formation of 2-isopropylmaleate. The sequence is that of 3-isopropylmalate dehydratase small subunit from Kineococcus radiotolerans (strain ATCC BAA-149 / DSM 14245 / SRS30216).